The chain runs to 24 residues: FLPILAGLAAKIVPKLFCLATKKC.

Cys-18 and Cys-24 form a disulfide bridge.

As to expression, expressed by the skin glands.

The protein localises to the secreted. Its subcellular location is the target cell membrane. Antibacterial peptide. Has activity against the Gram-positive bacterium S.aureus (MIC=2 uM) and the Gram-negative bacterium E.coli (MIC=32 uM). Has a strong hemolytic activity (LC(50)=5 uM). This Rana cascadae (Cascades frog) protein is Brevinin-1CSa.